The primary structure comprises 252 residues: MRPLIVIGNWKMNGSLANNQDWVKTVARGMESGMPSGRKYAVCPPFPYLQQCADLIKGHSLAFLSLGAQDASAYGSGVYTGEVAAAMLKEFGCTCVIVGHSERRQMHQEVDEVIASKALQVLDNSMTPVICVGETADERNSGRAQEIVCSQVAKQVGVLQDRLVDCLIAYEPVWAIGTGKVASAQVAQDMHRAIRLQLAEFNEDVASHVGILYGGSVKPDNAVELFAMPDIDGGLVGGASLSPQDFLAICKA.

9 to 11 (NWK) is a substrate binding site. Catalysis depends on His-100, which acts as the Electrophile. Glu-171 acts as the Proton acceptor in catalysis. Residues Gly-177, Ser-216, and 237 to 238 (GG) each bind substrate.

This sequence belongs to the triosephosphate isomerase family. As to quaternary structure, homodimer.

It localises to the cytoplasm. The enzyme catalyses D-glyceraldehyde 3-phosphate = dihydroxyacetone phosphate. It participates in carbohydrate biosynthesis; gluconeogenesis. Its pathway is carbohydrate degradation; glycolysis; D-glyceraldehyde 3-phosphate from glycerone phosphate: step 1/1. Functionally, involved in the gluconeogenesis. Catalyzes stereospecifically the conversion of dihydroxyacetone phosphate (DHAP) to D-glyceraldehyde-3-phosphate (G3P). The protein is Triosephosphate isomerase of Polynucleobacter necessarius subsp. necessarius (strain STIR1).